Consider the following 96-residue polypeptide: Neutrophil defensin 1 (96 aa).

The signal sequence occupies residues M1–A19. A propeptide spanning residues E20–M66 is cleaved from the precursor. Disulfide bonds link C68-C96, C70-C85, and C75-C95. At Y87 the chain carries Phosphotyrosine.

Tetramer. Dimer. Interacts with RETN. ADP-ribosylation drastically reduces cytotoxic and antibacterial activities, and enhances IL8 production.

The protein localises to the secreted. Functionally, effector molecule of the innate immune system that acts via antibiotic-like properties against a broad array of infectious agents including bacteria, fungi, and viruses or by promoting the activation and maturation of some APCs. Interacts with the essential precursor of cell wall synthesis lipid II to inhibit bacterial cell wall synthesis. Inhibits adenovirus infection via inhibition of viral disassembly at the vertex region, thereby restricting the release of internal capsid protein pVI, which is required for endosomal membrane penetration during cell entry. In addition, interaction with adenovirus capsid leads to the redirection of viral particles to TLR4 thereby promoting a NLRP3-mediated inflammasome response and interleukin 1-beta (IL-1beta) release. Induces the production of proinflammatory cytokines including type I interferon (IFN) in plasmacytoid dendritic cells (pDCs) by triggering the degradation of NFKBIA and nuclear translocation of IRF1, both of which are required for activation of pDCs. The sequence is that of Neutrophil defensin 1 from Macaca mulatta (Rhesus macaque).